The primary structure comprises 157 residues: Transcriptional repressor NrdR (157 aa).

Residues 1–21 (MRCPYCSSEDSQVKDSRPAED) are disordered. A zinc finger lies at 3–34 (CPYCSSEDSQVKDSRPAEDGNAIRRRRICPDC). Over residues 11 to 21 (SQVKDSRPAED) the composition is skewed to basic and acidic residues. Residues 49–139 (LMIIKKTGRK…VYRDFSHAED (91 aa)) enclose the ATP-cone domain.

This sequence belongs to the NrdR family. Zn(2+) serves as cofactor.

Its function is as follows. Negatively regulates transcription of bacterial ribonucleotide reductase nrd genes and operons by binding to NrdR-boxes. In Sinorhizobium fredii (strain NBRC 101917 / NGR234), this protein is Transcriptional repressor NrdR.